The following is a 176-amino-acid chain: Large ribosomal subunit protein uL6 (176 aa).

Residues 151 to 170 (RPPEPYKGKGVRYADEQVRR) show a composition bias toward basic and acidic residues. Residues 151-176 (RPPEPYKGKGVRYADEQVRRKEAKKK) form a disordered region.

The protein belongs to the universal ribosomal protein uL6 family. Part of the 50S ribosomal subunit.

Its function is as follows. This protein binds to the 23S rRNA, and is important in its secondary structure. It is located near the subunit interface in the base of the L7/L12 stalk, and near the tRNA binding site of the peptidyltransferase center. This chain is Large ribosomal subunit protein uL6, found in Shewanella halifaxensis (strain HAW-EB4).